We begin with the raw amino-acid sequence, 210 residues long: Large ribosomal subunit protein bL25 (210 aa).

A disordered region spans residues leucine 190–glutamate 210. Positions glutamate 196–glutamate 210 are enriched in acidic residues.

The protein belongs to the bacterial ribosomal protein bL25 family. CTC subfamily. As to quaternary structure, part of the 50S ribosomal subunit; part of the 5S rRNA/L5/L18/L25 subcomplex. Contacts the 5S rRNA. Binds to the 5S rRNA independently of L5 and L18.

In terms of biological role, this is one of the proteins that binds to the 5S RNA in the ribosome where it forms part of the central protuberance. The polypeptide is Large ribosomal subunit protein bL25 (Chelativorans sp. (strain BNC1)).